The chain runs to 949 residues: Piwi-like protein 2 (949 aa).

The segment at 1–125 (MDPTRPPFRG…SLSTRVQQAS (125 aa)) is disordered. The span at 115 to 125 (PSLSTRVQQAS) shows a compositional bias: polar residues. Positions 366 to 478 (SVLDIMNILY…LLPELAFMTG (113 aa)) constitute a PAZ domain. Residues 644–935 (LLVCLISGTR…LAFLSGQFLH (292 aa)) form the Piwi domain. Active-site residues include Asp721, Glu759, Asp791, and His924.

This sequence belongs to the argonaute family. Piwi subfamily. Component of the PET complex. The cofactor is Mg(2+). In terms of processing, methylated on arginine residues; required for the interaction with Tudor domain-containing protein and subsequent localization to the meiotic nuage, also named P granule. In terms of tissue distribution, expressed in oocytes, testis and liver (at protein level).

The protein localises to the cytoplasm. It is found in the nucleus. Functionally, endoribonuclease that plays a central role during spermatogenesis by repressing transposable elements and preventing their mobilization, which is essential for the germline integrity. Plays an essential role in meiotic differentiation of spermatocytes, germ cell differentiation and in self-renewal of spermatogonial stem cells. Acts via the piRNA metabolic process, which mediates the repression of transposable elements during meiosis by forming complexes composed of piRNAs and Piwi proteins and govern the methylation and subsequent repression of transposons. During piRNA biosynthesis, plays a key role in the piRNA amplification loop, also named ping-pong amplification cycle, by acting as a 'slicer-competent' piRNA endoribonuclease that cleaves primary piRNAs, which are then loaded onto 'slicer-incompetent' piwil4. Piwil2 slicing produces a pre-miRNA intermediate, which is then processed in mature piRNAs, and as well as a 16 nucleotide by-product that is degraded. Required for piwil4/miwi2 nuclear localization and association with secondary piRNAs antisense. Represses circadian rhythms by promoting the stability and activity of core clock components BMAL1 and CLOCK. In Xenopus tropicalis (Western clawed frog), this protein is Piwi-like protein 2 (piwil2).